The chain runs to 937 residues: Leucine--tRNA ligase (937 aa).

The 'HIGH' region signature appears at 34 to 44; sequence PYPSGAMHIGH. Positions 609 to 613 match the 'KMSKS' region motif; sequence KMSSS.

It belongs to the class-I aminoacyl-tRNA synthetase family.

It is found in the cytoplasm. The catalysed reaction is tRNA(Leu) + L-leucine + ATP = L-leucyl-tRNA(Leu) + AMP + diphosphate. The chain is Leucine--tRNA ligase from Methanothermobacter thermautotrophicus (strain ATCC 29096 / DSM 1053 / JCM 10044 / NBRC 100330 / Delta H) (Methanobacterium thermoautotrophicum).